The sequence spans 238 residues: GATA transcription factor 7 (238 aa).

Residues 24-64 are disordered; it reads TSLESSSSQRKEDEQEREKFKSFSDQSTRLSPPEDLLSFPG. A compositionally biased stretch (basic and acidic residues) spans 32 to 45; sequence QRKEDEQEREKFKS. The Nuclear localization signal motif lies at 112-119; sequence KPRSKRRR. The segment at 160–214 adopts a GATA-type zinc-finger fold; sequence QQLRRCCSHCGVQKTPQWRMGPLGAKTLCNACGVRFKSGRLLPEYRPACSPTFTN.

Belongs to the type IV zinc-finger family. Class A subfamily.

The protein resides in the nucleus. In terms of biological role, transcriptional activator that specifically binds 5'-GATA-3' or 5'-GAT-3' motifs within gene promoters. May be involved in the regulation of some light-responsive genes. The sequence is that of GATA transcription factor 7 (GATA7) from Arabidopsis thaliana (Mouse-ear cress).